The following is an 87-amino-acid chain: Protein E7 (87 aa).

The E7 terminal domain stretch occupies residues 1–38 (MHGPHPTVKDIELSLAPEDVPVQCNVQLDEEDYTNVEE). A zinc finger lies at 50–86 (CPKCSSPLRLVVECSHADIRALEQLLLGTLTVVCPRC). Positions 68-76 (IRALEQLLL) match the Nuclear export signal motif.

Belongs to the papillomaviridae E7 protein family. Homodimer. Homooligomer. Interacts with host RB1; this interaction induces dissociation of RB1-E2F1 complex thereby disrupting RB1 activity. Interacts with host EP300; this interaction represses EP300 transcriptional activity. Interacts with protein E2; this interaction inhibits E7 oncogenic activity. Interacts with host TMEM173/STING; this interaction impairs the ability of TMEM173/STING to sense cytosolic DNA and promote the production of type I interferon (IFN-alpha and IFN-beta). In terms of processing, highly phosphorylated.

The protein resides in the host cytoplasm. The protein localises to the host nucleus. Its function is as follows. Plays a role in viral genome replication by driving entry of quiescent cells into the cell cycle. Stimulation of progression from G1 to S phase allows the virus to efficiently use the cellular DNA replicating machinery to achieve viral genome replication. E7 protein has both transforming and trans-activating activities. Induces the disassembly of the E2F1 transcription factor from RB1, with subsequent transcriptional activation of E2F1-regulated S-phase genes. Interferes with host histone deacetylation mediated by HDAC1 and HDAC2, leading to transcription activation. Also plays a role in the inhibition of both antiviral and antiproliferative functions of host interferon alpha. Interaction with host TMEM173/STING impairs the ability of TMEM173/STING to sense cytosolic DNA and promote the production of type I interferon (IFN-alpha and IFN-beta). In Human papillomavirus 28, this protein is Protein E7.